Consider the following 299-residue polypeptide: Cycloserine biosynthesis protein DcsG (299 aa).

6 residues coordinate ATP: lysine 92, lysine 137, serine 144, glutamine 175, proline 176, and valine 178. Positions 95–298 (LADLAAHGVP…FAQALAERLK (204 aa)) constitute an ATP-grasp domain. Active-site residues include arginine 220 and arginine 254. Mg(2+) contacts are provided by glutamate 269 and glutamate 271. Glutamate 271 is a catalytic residue.

Monomer. It depends on Mg(2+) as a cofactor.

It catalyses the reaction O-ureido-D-serine + ATP + H2O + H(+) = D-cycloserine + NH4(+) + ADP + phosphate + CO2. Involved in the biosynthesis of the antibiotic D-cycloserine (DCS), a cyclic structural analog of D-alanine, used as an antitubercular agent. Catalyzes the synthesis of D-cycloserine from O-ureido-D-serine (D-OUS). It reacts with D-OUS, D-homocysteine and beta-aminooxy-D-alanine. The protein is Cycloserine biosynthesis protein DcsG of Streptomyces lavendulae.